The chain runs to 497 residues: NADH-ubiquinone oxidoreductase chain 4 (497 aa).

14 helical membrane-spanning segments follow: residues 3 to 23, 42 to 62, 94 to 114, 122 to 142, 144 to 164, 178 to 198, 220 to 240, 250 to 270, 276 to 296, 313 to 333, 340 to 360, 374 to 394, 418 to 438, and 463 to 483; these read FLLYYTLFISFMLWLAALLII, LFFSFFQFILIIFFWILSDNI, ISLLFLLLTFFLTPICILISW, NSFIICLIFITFILFNIFCVL, LVFFYIFFESILIPMFILIGV, LFFYTLLGSLLMLLGILVIYS, ILWASFFFAFCVKVPLFPFHI, PTVGSVILAGVLLKLGTYGLL, IFCDATYFFLPLVYTLCLLGI, IAYASVSHMSFVILGLFTSNI, VFLMLSHGIVSSGLFFCIGCV, GLVSTMPIFSLCLFILILSNI, FAALIATFSIILTAVYSIWLY, and VVGFIFCFITILFGLKGSYII.

Belongs to the complex I subunit 4 family.

Its subcellular location is the mitochondrion membrane. The catalysed reaction is a ubiquinone + NADH + 5 H(+)(in) = a ubiquinol + NAD(+) + 4 H(+)(out). Core subunit of the mitochondrial membrane respiratory chain NADH dehydrogenase (Complex I) that is believed to belong to the minimal assembly required for catalysis. Complex I functions in the transfer of electrons from NADH to the respiratory chain. The immediate electron acceptor for the enzyme is believed to be ubiquinone. The sequence is that of NADH-ubiquinone oxidoreductase chain 4 (ND4) from Acanthamoeba castellanii (Amoeba).